The sequence spans 180 residues: ATP-dependent protease subunit HslV (180 aa).

T6 is an active-site residue. G162, C165, and T168 together coordinate Na(+).

It belongs to the peptidase T1B family. HslV subfamily. In terms of assembly, a double ring-shaped homohexamer of HslV is capped on each side by a ring-shaped HslU homohexamer. The assembly of the HslU/HslV complex is dependent on binding of ATP.

Its subcellular location is the cytoplasm. It catalyses the reaction ATP-dependent cleavage of peptide bonds with broad specificity.. With respect to regulation, allosterically activated by HslU binding. Functionally, protease subunit of a proteasome-like degradation complex believed to be a general protein degrading machinery. The protein is ATP-dependent protease subunit HslV of Oleidesulfovibrio alaskensis (strain ATCC BAA-1058 / DSM 17464 / G20) (Desulfovibrio alaskensis).